The primary structure comprises 315 residues: uncharacterized protein (315 aa).

The next 3 membrane-spanning stretches (helical) occupy residues 18–38 (IWFIIFYLFVIQALGSAIISG), 202–222 (ILAIAMFIVIWPVTMGILAGI), and 244–264 (LIYAVVIAFVCTPVAIIVIVL). The tract at residues 288-315 (VCSTGNRSSGSTDQDISTTKQQSQEAVA) is disordered.

Its subcellular location is the membrane. This is an uncharacterized protein from Saccharomyces cerevisiae (strain ATCC 204508 / S288c) (Baker's yeast).